The primary structure comprises 214 residues: STS14 protein (214 aa).

An N-terminal signal peptide occupies residues 1-19 (MFVLSTAMACLVYIYIYIY). Repeat copies occupy residues 13 to 14 (YI), 15 to 16 (YI), and 17 to 18 (YI). Residues 13-18 (YIYIYI) are 3 X 2 AA tandem repeats of Y-I. One can recognise an SCP domain in the interval 80 to 200 (LDAHNKARSE…YEGPATLTVC (121 aa)).

This sequence belongs to the CRISP family. In terms of tissue distribution, highly expressed in the stigma and stylar cortex throughout pistil development. Not expressed in other organs.

In terms of biological role, may protect the outer tissues of the pistil from pathogen attack. This chain is STS14 protein (STS14), found in Solanum tuberosum (Potato).